Consider the following 424-residue polypeptide: MAKNIQAIRGMNDYLPGETAIWQRIEGTLKNVLGSYGYSEIRLPIVEQTPLFKRAIGEVTDVVEKEMYTFEDRNGDSLTLRPEGTAGCVRAGIEHGLLYNQEQRLWYIGPMFRHERPQKGRYRQFHQLGCEVFGLQGPDIDAELIMLTARWWRALGISEHVTLELNSIGSLEARANYRDALVAFLEQHKEKLDEDCKRRMYTNPLRVLDSKNPEVQALLNDAPALGDYLDEESREHFAGLCKLLESAGIAYTVNQRLVRGLDYYNRTVFEWVTNSLGSQGTVCAGGRYDGLVEQLGGRATPAVGFAMGLERLVLLVQAVNPEFKADPVVDIYLVASGADTQSAAMALAERLRDELPGVKLMTNHGGGNFKKQFTRADKWGARVAVVLGESEVANGTAVVKDLRSGEQTAVAQDSVAAHLRTLLG.

The protein belongs to the class-II aminoacyl-tRNA synthetase family. In terms of assembly, homodimer.

The protein localises to the cytoplasm. It catalyses the reaction tRNA(His) + L-histidine + ATP = L-histidyl-tRNA(His) + AMP + diphosphate + H(+). The chain is Histidine--tRNA ligase from Escherichia coli (strain 55989 / EAEC).